Here is an 89-residue protein sequence, read N- to C-terminus: Cell division topological specificity factor (89 aa).

Belongs to the MinE family.

Its function is as follows. Prevents the cell division inhibition by proteins MinC and MinD at internal division sites while permitting inhibition at polar sites. This ensures cell division at the proper site by restricting the formation of a division septum at the midpoint of the long axis of the cell. This is Cell division topological specificity factor from Heliobacterium modesticaldum (strain ATCC 51547 / Ice1).